The primary structure comprises 333 residues: Adenosine deaminase (333 aa).

Residues H12 and H14 each coordinate Zn(2+). Positions 14, 16, and 170 each coordinate substrate. Zn(2+) is bound at residue H197. Catalysis depends on E200, which acts as the Proton donor. D278 is a Zn(2+) binding site. D279 is a substrate binding site.

The protein belongs to the metallo-dependent hydrolases superfamily. Adenosine and AMP deaminases family. Adenosine deaminase subfamily. Zn(2+) serves as cofactor.

The enzyme catalyses adenosine + H2O + H(+) = inosine + NH4(+). The catalysed reaction is 2'-deoxyadenosine + H2O + H(+) = 2'-deoxyinosine + NH4(+). Catalyzes the hydrolytic deamination of adenosine and 2-deoxyadenosine. The polypeptide is Adenosine deaminase (Escherichia coli O81 (strain ED1a)).